A 518-amino-acid chain; its full sequence is Serine incorporator 4 (518 aa).

Transmembrane regions (helical) follow at residues 59–79, 122–142, 153–173, 184–204, 222–242, 259–279, 286–306, 338–357, 427–447, and 470–490; these read CSRL…CLLL, VCAG…HLHS, SFWL…FCIP, IGIC…TAFA, FLAV…GAVL, LLSL…APCI, SGLL…FSAL, ISLA…FACN, AFHF…TNWF, and VASC…PLCW.

This sequence belongs to the TDE1 family.

Its subcellular location is the membrane. Its function is as follows. Incorporates a polar amino acid serine into membranes and facilitates the synthesis of two serine-derived lipids, phosphatidylserine and sphingolipids. This is Serine incorporator 4 (SERINC4) from Homo sapiens (Human).